Here is a 781-residue protein sequence, read N- to C-terminus: Protein argonaute (781 aa).

The PAZ domain occupies 110–194 (SMNELLTERR…RHNDYCNSVM (85 aa)). The region spanning 436-760 (LVVIVIPGPK…LSKFCGEVLR (325 aa)) is the Piwi domain.

Belongs to the argonaute family. Ago subfamily. In terms of assembly, interacts with miR2. Highly specific binding to the mRNA m7G-cap. May be a component of the RNA-induced silencing complex (RISC), a sequence-specific, multicomponent nuclease that destroys or silences messenger RNAs homologous to the silencing trigger.

It localises to the cytoplasm. Functionally, plays an essential role in growth and, with Dicer, also involved in microRNA (miRNA)-mediated translational repression. The RNA interference pathway is implicated in antigenic variation having a role in regulation of variant-specific surface protein (VSP)-coding gene expression. Several VSP genes are transcribed but only transcripts encoding the VSP to be expressed accumulate. Antisense RNAs corresponding to the silenced VSP genes are detected. In Giardia intestinalis (Giardia lamblia), this protein is Protein argonaute.